The primary structure comprises 186 residues: Photosystem I assembly protein Ycf4 (186 aa).

Transmembrane regions (helical) follow at residues 22–42 and 57–77; these read FCWA…GTSS and IIFF…LFIS.

It belongs to the Ycf4 family.

It is found in the plastid. Its subcellular location is the chloroplast thylakoid membrane. Functionally, seems to be required for the assembly of the photosystem I complex. The polypeptide is Photosystem I assembly protein Ycf4 (Vitis vinifera (Grape)).